Reading from the N-terminus, the 103-residue chain is Urease subunit beta (103 aa).

This sequence belongs to the urease beta subunit family. In terms of assembly, heterotrimer of UreA (gamma), UreB (beta) and UreC (alpha) subunits. Three heterotrimers associate to form the active enzyme.

It localises to the cytoplasm. The catalysed reaction is urea + 2 H2O + H(+) = hydrogencarbonate + 2 NH4(+). The protein operates within nitrogen metabolism; urea degradation; CO(2) and NH(3) from urea (urease route): step 1/1. The sequence is that of Urease subunit beta from Mycobacterium marinum (strain ATCC BAA-535 / M).